A 456-amino-acid chain; its full sequence is Bacteriochlorophyllide d C-12(1)-methyltransferase (456 aa).

The region spanning 178–405 (HAKKYSQLIP…MFEPKKLGGE (228 aa)) is the Radical SAM core domain. The [4Fe-4S] cluster site is built by C194, C198, and C201.

This sequence belongs to the radical SAM superfamily. It depends on [4Fe-4S] cluster as a cofactor.

The protein localises to the cytoplasm. It catalyses the reaction 8-ethyl-12-methyl-3-vinylbacteriochlorophyllide d + S-adenosyl-L-methionine = 8,12-diethyl-3-vinylbacteriochlorophyllide d + S-adenosyl-L-homocysteine + H(+). It participates in porphyrin-containing compound metabolism; bacteriochlorophyll biosynthesis (light-independent). Functionally, involved in the biosynthesis of the major light-harvesting pigment bacteriochlorophyll c (BChlc), which confers a significant competitive advantage to green sulfur bacteria living at limiting red and near-infrared light intensities. BchR is a methyltransferase that adds a single methyl group to the methyl carbon at the C-12(1) position of 8-ethyl-12-methyl-3-vinylbacteriochlorophyllide d to yield 8,12-diethyl-3-vinylbacteriochlorophyllide d. The polypeptide is Bacteriochlorophyllide d C-12(1)-methyltransferase (Chlorobaculum tepidum (strain ATCC 49652 / DSM 12025 / NBRC 103806 / TLS) (Chlorobium tepidum)).